The chain runs to 234 residues: 2,3-bisphosphoglycerate-dependent phosphoglycerate mutase 1 (234 aa).

Residues 14-21 (RHGQSIWN), 27-28 (TG), Arg66, and 93-96 (ERHY) each bind substrate. The active-site Tele-phosphohistidine intermediate is the His15. Glu93 serves as the catalytic Proton donor/acceptor.

Belongs to the phosphoglycerate mutase family. BPG-dependent PGAM subfamily. In terms of assembly, homodimer.

The enzyme catalyses (2R)-2-phosphoglycerate = (2R)-3-phosphoglycerate. The protein operates within carbohydrate degradation; glycolysis; pyruvate from D-glyceraldehyde 3-phosphate: step 3/5. In terms of biological role, catalyzes the interconversion of 2-phosphoglycerate and 3-phosphoglycerate. This is 2,3-bisphosphoglycerate-dependent phosphoglycerate mutase 1 from Nitrosomonas europaea (strain ATCC 19718 / CIP 103999 / KCTC 2705 / NBRC 14298).